Here is an 876-residue protein sequence, read N- to C-terminus: GRB2-associated and regulator of MAPK protein (876 aa).

Residues 9 to 318 form a CABIT region; sequence KDVKWSSASF…NLIKGEVWQD (310 aa). Phosphotyrosine is present on tyrosine 451. 2 disordered regions span residues 460–569 and 708–741; these read SVKR…TLSY and DRML…LSEP. Positions 461-471 are enriched in polar residues; the sequence is VKRSGQPLTRS. A compositionally biased stretch (pro residues) spans 532–549; that stretch reads PPVPPRSSKPSSPTPSVP. Positions 556-569 are enriched in polar residues; sequence VRQQTRSPSPTLSY. In terms of domain architecture, SAM spans 811-876; sequence LSVEEVSKSL…QFINGWRPKM (66 aa).

Belongs to the GAREM family.

In terms of biological role, adapter protein that may provide a link between cell surface epidermal growth factor receptor and the MAPK/ERK signaling pathway. May promote cell proliferation. In Xenopus laevis (African clawed frog), this protein is GRB2-associated and regulator of MAPK protein (garem1).